The chain runs to 122 residues: Large ribosomal subunit protein uL18 (122 aa).

Belongs to the universal ribosomal protein uL18 family. As to quaternary structure, part of the 50S ribosomal subunit; part of the 5S rRNA/L5/L18/L25 subcomplex. Contacts the 5S and 23S rRNAs.

Its function is as follows. This is one of the proteins that bind and probably mediate the attachment of the 5S RNA into the large ribosomal subunit, where it forms part of the central protuberance. This Mycobacterium tuberculosis (strain ATCC 25177 / H37Ra) protein is Large ribosomal subunit protein uL18.